The chain runs to 116 residues: Large ribosomal subunit protein bL17 (116 aa).

The protein belongs to the bacterial ribosomal protein bL17 family. As to quaternary structure, part of the 50S ribosomal subunit. Contacts protein L32.

The sequence is that of Large ribosomal subunit protein bL17 from Prochlorococcus marinus subsp. pastoris (strain CCMP1986 / NIES-2087 / MED4).